Consider the following 232-residue polypeptide: Uracil phosphoribosyltransferase (232 aa).

Residue 38–42 (KGLVK) participates in GTP binding. 5-phospho-alpha-D-ribose 1-diphosphate-binding positions include R87, R112, and 140–148 (DPMIATGST). Residues I204 and 209-211 (GDA) contribute to the uracil site. D210 serves as a coordination point for 5-phospho-alpha-D-ribose 1-diphosphate.

Belongs to the UPRTase family. It depends on Mg(2+) as a cofactor.

It carries out the reaction UMP + diphosphate = 5-phospho-alpha-D-ribose 1-diphosphate + uracil. It functions in the pathway pyrimidine metabolism; UMP biosynthesis via salvage pathway; UMP from uracil: step 1/1. With respect to regulation, allosterically activated by GTP. In terms of biological role, catalyzes the conversion of uracil and 5-phospho-alpha-D-ribose 1-diphosphate (PRPP) to UMP and diphosphate. In Thermococcus sibiricus (strain DSM 12597 / MM 739), this protein is Uracil phosphoribosyltransferase.